The sequence spans 63 residues: MNFYKVFIFVALILAISLGQSEAGWLKKIGKKIERVGQHTRDATIQGLGIAQQAANVAATARG.

The first 23 residues, 1–23 (MNFYKVFIFVALILAISLGQSEA), serve as a signal peptide directing secretion. Arginine 62 bears the Arginine amide mark.

It belongs to the cecropin family.

The protein localises to the secreted. In terms of biological role, cecropins have lytic and antibacterial activity against several Gram-positive and Gram-negative bacteria. The protein is Cecropin-2 (Cec2A) of Drosophila virilis (Fruit fly).